We begin with the raw amino-acid sequence, 201 residues long: MNPEYDYLFKLLLIGDSGVGKSCLLLRFADDTYTESYISTIGVDFKIRTIELDGKTIKLQIWDTAGQERFRTITSSYYRGAHGIIVVYDVTDQESYANVKQWLQEIDRYASENVNKLLVGNKSDLTTKKVVDNTTAKEFADSLGIPFLETSAKNATNVEQAFMTMAAEIKKRMGPGAASGGERPNLKIDSTPVKQAGGGCC.

M1 is subject to N-acetylmethionine. Positions 17, 18, 19, 20, 21, 22, 23, 33, 34, 35, 36, 39, and 40 each coordinate GTP. Residue S22 participates in Mg(2+) binding. Residues 30–45 (DDTYTESYISTIGVDF) carry the Switch 1 motif. Residues T40 and D63 each contribute to the Mg(2+) site. The segment at 64–83 (TAGQERFRTITSSYYRGAHG) is switch 2 region; Required for interaction with REP1/CHM. Residues 65–80 (AGQERFRTITSSYYRG) carry the Switch 2 motif. 7 residues coordinate GTP: G66, N121, K122, D124, S151, A152, and K153. A disordered region spans residues 173 to 201 (MGPGAASGGERPNLKIDSTPVKQAGGGCC). 2 S-geranylgeranyl cysteine lipidation sites follow: C200 and C201. C201 is modified (cysteine methyl ester).

The protein belongs to the small GTPase superfamily. Rab family. Interacts with MICAL1 and MICAL2. Interacts (in GTP-bound form) with MICALCL, MICAL1 and MILCAL3. Interacts with GDI1; the interaction requires the GDP-bound state. Interacts with CHM/REP1; the interaction requires the GDP-bound form and is necessary for prenylation by GGTase II. Interacts with RabGAP TBC1D20. Interacts (in GDP-bound form) with lipid phosphatase MTMR6 (via GRAM domain); the interaction regulates MTMR6 recruitment to the endoplasmic reticulum-Golgi intermediate compartment. Interacts (in GDP-bound form) with lipid phosphatase MTMR7. It depends on Mg(2+) as a cofactor. Post-translationally, prenylated; by GGTase II, only after interaction of the substrate with Rab escort protein 1 (REP1).

The protein resides in the cytoplasm. It localises to the membrane. Its subcellular location is the preautophagosomal structure membrane. It is found in the perinuclear region. The catalysed reaction is GTP + H2O = GDP + phosphate + H(+). Its activity is regulated as follows. Regulated by guanine nucleotide exchange factors (GEFs) which promote the exchange of bound GDP for free GTP. Regulated by GTPase activating proteins (GAPs) including TBC1D20 which increases the GTP hydrolysis activity. Inhibited by GDP dissociation inhibitors (GDIs). The small GTPases Rab are key regulators of intracellular membrane trafficking, from the formation of transport vesicles to their fusion with membranes. Rabs cycle between an inactive GDP-bound form and an active GTP-bound form that is able to recruit to membranes different set of downstream effectors directly responsible for vesicle formation, movement, tethering and fusion. Plays a role in the initial events of the autophagic vacuole development which take place at specialized regions of the endoplasmic reticulum. Regulates vesicular transport between the endoplasmic reticulum and successive Golgi compartments. Required to modulate the compacted morphology of the Golgi. Promotes the recruitment of lipid phosphatase MTMR6 to the endoplasmic reticulum-Golgi intermediate compartment. The polypeptide is Ras-related protein Rab-1B (RAB1B) (Bos taurus (Bovine)).